The chain runs to 313 residues: Formimidoylglutamase (313 aa).

H130, D155, H157, D159, D241, and D243 together coordinate Mn(2+).

It belongs to the arginase family. Mn(2+) serves as cofactor.

It catalyses the reaction N-formimidoyl-L-glutamate + H2O = formamide + L-glutamate. It functions in the pathway amino-acid degradation; L-histidine degradation into L-glutamate; L-glutamate from N-formimidoyl-L-glutamate (hydrolase route): step 1/1. Functionally, catalyzes the conversion of N-formimidoyl-L-glutamate to L-glutamate and formamide. This Salmonella enteritidis PT4 (strain P125109) protein is Formimidoylglutamase.